A 299-amino-acid chain; its full sequence is Palmitoyltransferase ZDHHC3 (299 aa).

The Cytoplasmic segment spans residues 1–47 (MMLIPTHHFRDIERKPEYLQPEKCAPPPFPGPVGTMWFIRDGCGIAC). Tyrosine 18 bears the Phosphotyrosine mark. A helical transmembrane segment spans residues 48-68 (AIVTWFLVLYAEFVVLFVMLI). Topologically, residues 69-72 (PSRD) are lumenal. The helical transmembrane segment at 73-93 (YAYSIINGIVFNLLAFLALAS) threads the bilayer. Residues 94-171 (HCRAMLTDPG…NCVGENNQKY (78 aa)) are Cytoplasmic-facing. The DHHC domain occupies 128-254 (KCPKCCSIKP…DETGIEQLKK (127 aa)). Cysteine 146 carries the S-palmitoyl cysteine lipid modification. Cysteine 157 serves as the catalytic S-palmitoyl cysteine intermediate. A helical transmembrane segment spans residues 172–192 (FVLFTMYIALISLHALIMVGF). Topologically, residues 193 to 214 (HFLHCFEEDWTKCSSFSPPTTV) are lumenal. The chain crosses the membrane as a helical span at residues 215-235 (ILLILLCFEALLFLIFTSVMF). The Cytoplasmic segment spans residues 236–299 (GTQVHSICTD…GKADPYQYVV (64 aa)).

Belongs to the DHHC palmitoyltransferase family. In terms of assembly, monomer. Homooligomers. The monomeric form has a higher catalytic activity. Forms heterooligomers with ZDHHC7. Interacts with TNFRSF10A. Post-translationally, phosphorylation by FGFR1 and SRC probably regulates the palmitoyltransferase activity. In terms of processing, autopalmitoylated.

It is found in the golgi apparatus membrane. It catalyses the reaction L-cysteinyl-[protein] + hexadecanoyl-CoA = S-hexadecanoyl-L-cysteinyl-[protein] + CoA. The enzyme catalyses L-cysteinyl-[protein] + tetradecanoyl-CoA = S-tetradecanoyl-L-cysteinyl-[protein] + CoA. It carries out the reaction L-cysteinyl-[protein] + octadecanoyl-CoA = S-octadecanoyl-L-cysteinyl-[protein] + CoA. Its function is as follows. Golgi-localized palmitoyltransferase that catalyzes the addition of palmitate onto various protein substrates. Has no stringent fatty acid selectivity and in addition to palmitate can also transfer onto target proteins myristate from tetradecanoyl-CoA and stearate from octadecanoyl-CoA. Plays an important role in G protein-coupled receptor signaling pathways involving GNAQ and potentially other heterotrimeric G proteins by regulating their dynamic association with the plasma membrane. Palmitoylates ITGA6 and ITGB4, thereby regulating the alpha-6/beta-4 integrin localization, expression and function in cell adhesion to laminin. Plays a role in the TRAIL-activated apoptotic signaling pathway most probably through the palmitoylation and localization to the plasma membrane of TNFRSF10A. In the brain, by palmitoylating the gamma subunit GABRG2 of GABA(A) receptors and regulating their postsynaptic accumulation, plays a role in synaptic GABAergic inhibitory function and GABAergic innervation. Palmitoylates the neuronal protein GAP43 which is also involved in the formation of GABAergic synapses. Palmitoylates NCDN thereby regulating its association with endosome membranes. Probably palmitoylates PRCD and is involved in its proper localization within the photoreceptor. Could mediate the palmitoylation of NCAM1 and regulate neurite outgrowth. Could palmitoylate DNAJC5 and regulate its localization to Golgi membranes. Also constitutively palmitoylates DLG4. May also palmitoylate SNAP25. Could palmitoylate the glutamate receptors GRIA1 and GRIA2 but this has not been confirmed in vivo. Could also palmitoylate the D(2) dopamine receptor DRD2. May also palmitoylate LAMTOR1, promoting its localization to lysosomal membranes. Palmitoylates the Toll-like receptor 9/TLR9 in the Golgi and thereby regulates TLR9 trafficking to endosomes. May palmitoylate CALHM1 and CALHM3 subunits of gustatory voltage-gated ion channels and modulate channel gating and kinetics. This Rattus norvegicus (Rat) protein is Palmitoyltransferase ZDHHC3.